The following is a 707-amino-acid chain: G protein-coupled receptor kinase 2 (707 aa).

Residues Met1–Asp190 are N-terminal. One can recognise an RGS domain in the interval Lys54–Cys175. Residues Phe191–Phe455 form the Protein kinase domain. ATP-binding positions include Ile197–Val205 and Lys220. The active-site Proton acceptor is the Asp318. The 68-residue stretch at Lys456 to Ile523 folds into the AGC-kinase C-terminal domain. A PH domain is found at Asp558 to Lys658.

This sequence belongs to the protein kinase superfamily. AGC Ser/Thr protein kinase family. GPRK subfamily. Interacts with amx-2; the interaction promotes phosphorylation of amx-2. In terms of tissue distribution, expressed in many neurons in the adult including the ASH neurons and other sensory neurons, many interneurons, and motor neurons of the ventral nerve cord. Expressed broadly in head neurons and is detected in several head acetylcholine neurons including the AVA, AVB, AVD and AVE premotor interneurons, the SMD and RMD head motor neurons, and the AIN, AIY, SIA, SIB and SAA interneurons. Expressed in HSN motor neurons and VC4/VC5 motor neurons. Also expressed in vulval muscle cells. Expressed in premotor and RIS interneurons. Expressed in ciliated neurons such as AWA, AWB, AWC, ASH and ADF olfactory and nociceptive neurons, and in chemosensory ASH neurons. Expressed in RMG neurons and AVK interneurons.

It catalyses the reaction [G-protein-coupled receptor] + ATP = [G-protein-coupled receptor]-phosphate + ADP + H(+). Its function is as follows. Specifically phosphorylates the activated forms of G protein-coupled receptors. Required in adult sensory neurons for chemotaxis. Plays a role in the ASH sensory neurons in the chemotaxis response to NaCl where it is likely to modulate the strength of the NaCl avoidance response which occurs at high NaCl concentrations. Required in the HSN motor neurons for normal egg laying by promoting phosphorylation of amine oxidase amx-2 which inhibits amx-2 activity, preventing metabolism of serotonin. Acts in head acetylcholine neurons to positively regulate locomotion. Inactivates dopamine receptor dop-3 which leads to inactivation of guanine nucleotide-binding protein G(o) subunit goa-1 and activation of the unc-77/nca-1 and nca-2 ion channel proteins. Acts as a positive regulator of swimming by inactivating two dopamine receptors, dop-3 in the premotor interneurons that negatively controls early swimming through the nca ion channel, and dop-1 in the RIS neuron that inhibits late-stage swimming via the signaling of FMRFamide-like neuropeptide flp-11. Controls movement quiescence by negatively regulating multiple targets including egl-4 in ciliated neurons, the level of ligands of the neuropeptide receptor npr-1 in RMG neurons, and the secretion of flp-1 from AVK interneurons. The protein is G protein-coupled receptor kinase 2 (grk-2) of Caenorhabditis elegans.